The following is a 446-amino-acid chain: Hepatocyte nuclear factor 4-beta (446 aa).

The segment at residues 47-122 (NSFCAICGDR…AGMKKEAVQN (76 aa)) is a DNA-binding region (nuclear receptor). 2 consecutive NR C4-type zinc fingers follow at residues 50 to 70 (CAIC…CDGC) and 86 to 110 (CRFS…LRKC). The region spanning 137–366 (NGSLSINVLT…SLLQELLLGG (230 aa)) is the NR LBD domain.

This sequence belongs to the nuclear hormone receptor family. NR2 subfamily. Homodimerization is required for HNF4-alpha to bind to its recognition site. In terms of tissue distribution, expressed in liver, kidney, stomach, intestine, lung, ovary, and testis. Not expressed in fat, muscle and brain.

The protein localises to the nucleus. Functionally, transcription factor; binds and activates the promoter for the HNF1-alpha gene. Seems to have a lower DNA binding activity than HNF4-alpha and is a weaker transactivator than the alpha isoform. This chain is Hepatocyte nuclear factor 4-beta (hnf4b), found in Xenopus laevis (African clawed frog).